Here is a 115-residue protein sequence, read N- to C-terminus: U3-lycotoxin-Ls1e (115 aa).

A signal peptide spans 1 to 20 (MKFVLLFGVLSLTLFSYSSA). The propeptide occupies 21–44 (EMLDDFDQADEDELLSLIEKEEAR). 4 disulfide bridges follow: cysteine 48-cysteine 63, cysteine 55-cysteine 72, cysteine 62-cysteine 87, and cysteine 74-cysteine 85.

It belongs to the neurotoxin 19 (CSTX) family. 01 subfamily. Expressed by the venom gland.

It localises to the secreted. In Lycosa singoriensis (Wolf spider), this protein is U3-lycotoxin-Ls1e.